A 341-amino-acid chain; its full sequence is Glycerol-3-phosphate dehydrogenase [NAD(P)+] (341 aa).

NADPH is bound by residues serine 11, tryptophan 12, arginine 33, and lysine 106. Residues lysine 106, glycine 137, and serine 139 each coordinate sn-glycerol 3-phosphate. Alanine 141 contacts NADPH. Lysine 192, aspartate 245, serine 255, arginine 256, and asparagine 257 together coordinate sn-glycerol 3-phosphate. The active-site Proton acceptor is the lysine 192. Arginine 256 provides a ligand contact to NADPH. NADPH is bound by residues valine 280 and glutamate 282.

It belongs to the NAD-dependent glycerol-3-phosphate dehydrogenase family.

The protein localises to the cytoplasm. The catalysed reaction is sn-glycerol 3-phosphate + NAD(+) = dihydroxyacetone phosphate + NADH + H(+). The enzyme catalyses sn-glycerol 3-phosphate + NADP(+) = dihydroxyacetone phosphate + NADPH + H(+). It participates in membrane lipid metabolism; glycerophospholipid metabolism. Its function is as follows. Catalyzes the reduction of the glycolytic intermediate dihydroxyacetone phosphate (DHAP) to sn-glycerol 3-phosphate (G3P), the key precursor for phospholipid synthesis. The chain is Glycerol-3-phosphate dehydrogenase [NAD(P)+] from Bacillus cytotoxicus (strain DSM 22905 / CIP 110041 / 391-98 / NVH 391-98).